Reading from the N-terminus, the 285-residue chain is Tropomyosin-2 (285 aa).

A coiled-coil region spans residues Met-1–Ala-277. The disordered stretch occupies residues Glu-103–Arg-133. Residues Glu-122–Arg-133 show a composition bias toward basic and acidic residues.

The protein belongs to the tropomyosin family. In terms of assembly, homodimer.

In terms of biological role, tropomyosin, in association with the troponin complex, plays a central role in the calcium dependent regulation of muscle contraction. This is Tropomyosin-2 from Bombyx mori (Silk moth).